A 163-amino-acid chain; its full sequence is uncharacterized protein (163 aa).

The Cytoplasmic portion of the chain corresponds to 1–33 (MKTLDKITNYDLFDFADEFLKFVPVFRPNPTVT). Residues 34–54 (CLFGNPLTNLLVNGTGAACFF) traverse the membrane as a helical segment. At 55 to 117 (EFCSLALIKV…SLGMALPDDD (63 aa)) the chain is on the extracellular side. A helical membrane pass occupies residues 118 to 138 (VLLSITFWFLCNSSFSILFVF). Residues 139 to 163 (ELRIFLRTVNNLLVVFLSVLKRNDL) lie on the Cytoplasmic side of the membrane.

The protein resides in the membrane. This is an uncharacterized protein from Saccharomyces cerevisiae (strain ATCC 204508 / S288c) (Baker's yeast).